An 84-amino-acid polypeptide reads, in one-letter code: Large ribosomal subunit protein bL27 (84 aa).

Positions Met-1–Lys-24 are disordered.

The protein belongs to the bacterial ribosomal protein bL27 family.

The polypeptide is Large ribosomal subunit protein bL27 (Leptospira borgpetersenii serovar Hardjo-bovis (strain JB197)).